The following is an 898-amino-acid chain: Protein translocase subunit SecA (898 aa).

Residues Q87, 105–109 (GEGKT), and D512 contribute to the ATP site. Positions 855 to 865 (MQYQNNEGTSS) are enriched in polar residues. The segment at 855 to 898 (MQYQNNEGTSSLHEKSEHKIGRNESCPCGSGKKYKHCHGSKAKY) is disordered. The segment covering 866-876 (LHEKSEHKIGR) has biased composition (basic and acidic residues). C880, C882, C891, and H892 together coordinate Zn(2+). Over residues 886-898 (KKYKHCHGSKAKY) the composition is skewed to basic residues.

It belongs to the SecA family. Monomer and homodimer. Part of the essential Sec protein translocation apparatus which comprises SecA, SecYEG and auxiliary proteins SecDF-YajC and YidC. Zn(2+) is required as a cofactor.

The protein resides in the cell inner membrane. The protein localises to the cytoplasm. It catalyses the reaction ATP + H2O + cellular proteinSide 1 = ADP + phosphate + cellular proteinSide 2.. Its function is as follows. Part of the Sec protein translocase complex. Interacts with the SecYEG preprotein conducting channel. Has a central role in coupling the hydrolysis of ATP to the transfer of proteins into and across the cell membrane, serving both as a receptor for the preprotein-SecB complex and as an ATP-driven molecular motor driving the stepwise translocation of polypeptide chains across the membrane. The chain is Protein translocase subunit SecA from Histophilus somni (strain 2336) (Haemophilus somnus).